The sequence spans 289 residues: MTLRKQRQEIYYEFTSSSFEITSPPESSKITLTNLYPILVRPYVPAVIPLGIRIIYGNKGQGFILAGSSQKKVFCHTGLIDPGYRGEIKLIVLNTTKYNVTLFAGELRVSLFSFFFSTPIIYDYDLLNRPQYSDDAGYDLYLQEDLMLFPQASTTVTIDSRVPTTTKFFKPVVFGRSGLATRGVVVDVVKWTHSPLTLKIYNFTDNTLRYSAGTRICQVVFVHRRHFPSKLKHFFTYINLNSKTSFYWANVSFVDCQNDAYRSLVTLPCQEDTDRGYRGDSGFGSSGMR.

Substrate contacts are provided by residues 176-178 and 283-284; these read RSG and FG.

The protein belongs to the dUTPase family. Mg(2+) serves as cofactor.

It catalyses the reaction dUTP + H2O = dUMP + diphosphate + H(+). Involved in nucleotide metabolism: produces dUMP, the immediate precursor of thymidine nucleotides and decreases the intracellular concentration of dUTP to avoid uracil incorporation into viral DNA. This Equus caballus (Horse) protein is Deoxyuridine 5'-triphosphate nucleotidohydrolase.